The primary structure comprises 238 residues: Type III pantothenate kinase (238 aa).

6–13 contributes to the ATP binding site; sequence DSGNTRIK. Residues Tyr-90 and 97–100 each bind substrate; that span reads GVDR. Asp-99 acts as the Proton acceptor in catalysis. Thr-122 contacts ATP. Thr-172 lines the substrate pocket.

It belongs to the type III pantothenate kinase family. Homodimer. NH4(+) serves as cofactor. The cofactor is K(+).

It is found in the cytoplasm. It carries out the reaction (R)-pantothenate + ATP = (R)-4'-phosphopantothenate + ADP + H(+). It participates in cofactor biosynthesis; coenzyme A biosynthesis; CoA from (R)-pantothenate: step 1/5. In terms of biological role, catalyzes the phosphorylation of pantothenate (Pan), the first step in CoA biosynthesis. The polypeptide is Type III pantothenate kinase (Dechloromonas aromatica (strain RCB)).